We begin with the raw amino-acid sequence, 239 residues long: Norbelladine 4'-O-methyltransferase 5 (239 aa).

S-adenosyl-L-methionine-binding positions include valine 55, glutamate 77, 79–80 (GV), serine 85, aspartate 103, and alanine 132. Aspartate 155 is a binding site for a divalent metal cation. Aspartate 157 contributes to the S-adenosyl-L-methionine binding site. The a divalent metal cation site is built by aspartate 181 and asparagine 182.

It belongs to the class I-like SAM-binding methyltransferase superfamily. Cation-dependent O-methyltransferase family. It depends on Mg(2+) as a cofactor.

The enzyme catalyses norbelladine + S-adenosyl-L-methionine = 4'-O-methylnorbelladine + S-adenosyl-L-homocysteine + H(+). Its pathway is alkaloid biosynthesis. Its function is as follows. 4'-O-methyltransferase converting norbelladine to 4'-O-methylnorbelladine. 4'-O-methylnorbelladine is a precursor to all Amaryllidaceae alkaloids such as galanthamine, lycorine and haemanthamine, and including haemanthamine- and crinamine-type alkaloids, promising anticancer agents. This Narcissus aff. pseudonarcissus MK-2014 (Daffodil) protein is Norbelladine 4'-O-methyltransferase 5.